The chain runs to 341 residues: Phosphoribosylformylglycinamidine cyclo-ligase (341 aa).

The protein belongs to the AIR synthase family.

Its subcellular location is the cytoplasm. It catalyses the reaction 2-formamido-N(1)-(5-O-phospho-beta-D-ribosyl)acetamidine + ATP = 5-amino-1-(5-phospho-beta-D-ribosyl)imidazole + ADP + phosphate + H(+). It participates in purine metabolism; IMP biosynthesis via de novo pathway; 5-amino-1-(5-phospho-D-ribosyl)imidazole from N(2)-formyl-N(1)-(5-phospho-D-ribosyl)glycinamide: step 2/2. This Alkaliphilus oremlandii (strain OhILAs) (Clostridium oremlandii (strain OhILAs)) protein is Phosphoribosylformylglycinamidine cyclo-ligase.